An 855-amino-acid polypeptide reads, in one-letter code: E3 ubiquitin-protein ligase TRIM71 (855 aa).

N-acetylalanine is present on alanine 2. The RING-type zinc finger occupies 12-94 (CLLCKEMCGS…ALKLRCPVCD (83 aa)). The span at 26–42 (SSSSSASSSSSQTSTSS) shows a compositional bias: low complexity. 2 disordered regions span residues 26–48 (SSSSSASSSSSQTSTSSAGGGGP) and 126–177 (ADEP…SPGS). Over residues 135–145 (RAGGGPGGAGG) the composition is skewed to gly residues. Residues 147–157 (SNHRHHAHHPA) show a composition bias toward basic residues. The B box-type 1; atypical zinc-finger motif lies at 181–228 (RRPHGCSSCDEGNAASSRCLDCQEHLCDNCVRAHQRVRLTKDHYIERG). The B box-type 2 zinc-finger motif lies at 260–301 (ERLGFCQHHDDEVLHLYCDTCSVPICRECTLGRHGGHSFAYL). 4 residues coordinate Zn(2+): cysteine 265, histidine 268, cysteine 288, and histidine 293. Residues 378–414 (QVKAKSLYLQVEKLRQNLNKLESTISAVQQVLEEGRA) adopt a coiled-coil conformation. A Filamin repeat occupies 466–567 (SSGAFAPLTK…IENSPFKVVV (102 aa)). NHL repeat units follow at residues 580-623 (VLSF…FKPC), 627-670 (HHKF…FTFE), 674-717 (LLKF…FGPD), 721-764 (LNKY…IHPD), 768-811 (ARFL…FEAN), and 815-855 (LCKF…ILIF).

Belongs to the TRIM/RBCC family. As to quaternary structure, interacts (via NHL repeats) with AGO2; the interaction increases in presence of RNA. Interacts with HSP90AA1. Interacts (via NHL repeats) with MOV10, PABPC1, PUM1, PUM2, STAU2, XRN1 and XRN2 in an RNA-dependent manner. Interacts with SHCBP1; leading to enhance its stability. Autoubiquitinated.

The protein localises to the cytoplasm. It is found in the P-body. It catalyses the reaction S-ubiquitinyl-[E2 ubiquitin-conjugating enzyme]-L-cysteine + [acceptor protein]-L-lysine = [E2 ubiquitin-conjugating enzyme]-L-cysteine + N(6)-ubiquitinyl-[acceptor protein]-L-lysine.. It functions in the pathway protein modification; protein ubiquitination. Functionally, E3 ubiquitin-protein ligase that cooperates with the microRNAs (miRNAs) machinery and promotes embryonic stem cells proliferation and maintenance. Binds to miRNAs and associates with AGO2, participating in post-transcriptional repression of transcripts such as CDKN1A. In addition, participates in post-transcriptional mRNA repression in a miRNA independent mechanism. Facilitates the G1-S transition to promote rapid embryonic stem cell self-renewal by repressing CDKN1A expression. Required to maintain proliferation and prevent premature differentiation of neural progenitor cells during early neural development: positively regulates FGF signaling by controlling the stability of SHCBP1. Specific regulator of miRNA biogenesis. Binds to miRNA MIR29A hairpin and postranscriptionally modulates MIR29A levels, which indirectly regulates TET proteins expression. In Rattus norvegicus (Rat), this protein is E3 ubiquitin-protein ligase TRIM71 (Trim71).